Consider the following 157-residue polypeptide: SUMO-conjugating enzyme UBC9 (157 aa).

At S2 the chain carries N-acetylserine. Residues 4 to 157 form the UBC core domain; that stretch reads LCLQRLQEER…VLLQAKQYSK (154 aa). The Glycyl thioester intermediate role is filled by C93.

It belongs to the ubiquitin-conjugating enzyme family. In terms of assembly, interacts with SIZ1.

Its subcellular location is the nucleus. It participates in protein modification; protein sumoylation. Its function is as follows. E2 ubiquitin-like--protein ligase mediating SUMO/Smt3 attachment to septins and PCNA. Seems to be involved in degradation of S- (CLB5) and M-phase cyclins (CLB2). The sequence is that of SUMO-conjugating enzyme UBC9 (UBC9) from Saccharomyces cerevisiae (strain ATCC 204508 / S288c) (Baker's yeast).